Consider the following 35-residue polypeptide: GLFLNTVKDVAKDVAKDVAGKLLESLKCKITGCKP.

Cys-28 and Cys-33 are disulfide-bonded.

In terms of tissue distribution, expressed by the skin glands.

It localises to the secreted. Functionally, antibacterial activity against Gram-positive bacterium S.aureus. Shows no detectable hemolytic activity towards human erythrocytes. This Lithobates septentrionalis (Mink frog) protein is Ranatuerin-2SPb.